An 810-amino-acid polypeptide reads, in one-letter code: Lon protease (810 aa).

The 194-residue stretch at 40–233 folds into the Lon N-terminal domain; the sequence is LIIVPVRGFV…MVAKLLAQRI (194 aa). ATP is bound at residue 385–392; that stretch reads GPPGVGKT. In terms of domain architecture, Lon proteolytic spans 621 to 802; the sequence is LSVPGVATGL…DDAMAAAFEG (182 aa). Active-site residues include Ser708 and Lys751.

Belongs to the peptidase S16 family. In terms of assembly, homohexamer. Organized in a ring with a central cavity.

It localises to the cytoplasm. The enzyme catalyses Hydrolysis of proteins in presence of ATP.. Its function is as follows. ATP-dependent serine protease that mediates the selective degradation of mutant and abnormal proteins as well as certain short-lived regulatory proteins. Required for cellular homeostasis and for survival from DNA damage and developmental changes induced by stress. Degrades polypeptides processively to yield small peptide fragments that are 5 to 10 amino acids long. Binds to DNA in a double-stranded, site-specific manner. The chain is Lon protease from Methylocella silvestris (strain DSM 15510 / CIP 108128 / LMG 27833 / NCIMB 13906 / BL2).